Reading from the N-terminus, the 300-residue chain is Ribosomal protein L11 methyltransferase (300 aa).

T152, G173, D195, and N234 together coordinate S-adenosyl-L-methionine.

This sequence belongs to the methyltransferase superfamily. PrmA family.

It localises to the cytoplasm. The enzyme catalyses L-lysyl-[protein] + 3 S-adenosyl-L-methionine = N(6),N(6),N(6)-trimethyl-L-lysyl-[protein] + 3 S-adenosyl-L-homocysteine + 3 H(+). Its function is as follows. Methylates ribosomal protein L11. This is Ribosomal protein L11 methyltransferase from Burkholderia cenocepacia (strain HI2424).